The primary structure comprises 204 residues: dITP/XTP pyrophosphatase (204 aa).

Residue 7 to 12 participates in substrate binding; the sequence is TNNKDK. Aspartate 38 and aspartate 74 together coordinate Mg(2+). Aspartate 74 (proton acceptor) is an active-site residue. Substrate is bound by residues serine 75, 156 to 159, lysine 179, and 184 to 185; these read FGYD and HR.

Belongs to the HAM1 NTPase family. Homodimer. It depends on Mg(2+) as a cofactor.

The enzyme catalyses XTP + H2O = XMP + diphosphate + H(+). It catalyses the reaction dITP + H2O = dIMP + diphosphate + H(+). It carries out the reaction ITP + H2O = IMP + diphosphate + H(+). Functionally, pyrophosphatase that catalyzes the hydrolysis of nucleoside triphosphates to their monophosphate derivatives, with a high preference for the non-canonical purine nucleotides XTP (xanthosine triphosphate), dITP (deoxyinosine triphosphate) and ITP. Seems to function as a house-cleaning enzyme that removes non-canonical purine nucleotides from the nucleotide pool, thus preventing their incorporation into DNA/RNA and avoiding chromosomal lesions. This Campylobacter fetus subsp. fetus (strain 82-40) protein is dITP/XTP pyrophosphatase.